A 253-amino-acid polypeptide reads, in one-letter code: 5'/3'-nucleotidase SurE (253 aa).

Residues D8, D9, S39, and N92 each contribute to the a divalent metal cation site.

The protein belongs to the SurE nucleotidase family. A divalent metal cation is required as a cofactor.

The protein resides in the cytoplasm. It catalyses the reaction a ribonucleoside 5'-phosphate + H2O = a ribonucleoside + phosphate. It carries out the reaction a ribonucleoside 3'-phosphate + H2O = a ribonucleoside + phosphate. The catalysed reaction is [phosphate](n) + H2O = [phosphate](n-1) + phosphate + H(+). Functionally, nucleotidase with a broad substrate specificity as it can dephosphorylate various ribo- and deoxyribonucleoside 5'-monophosphates and ribonucleoside 3'-monophosphates with highest affinity to 3'-AMP. Also hydrolyzes polyphosphate (exopolyphosphatase activity) with the preference for short-chain-length substrates (P20-25). Might be involved in the regulation of dNTP and NTP pools, and in the turnover of 3'-mononucleotides produced by numerous intracellular RNases (T1, T2, and F) during the degradation of various RNAs. The polypeptide is 5'/3'-nucleotidase SurE (Salmonella typhimurium (strain LT2 / SGSC1412 / ATCC 700720)).